The following is a 958-amino-acid chain: Protein translocase subunit SecA (958 aa).

ATP is bound by residues glutamine 86, glycine 104 to threonine 108, and aspartate 494. 2 disordered regions span residues alanine 863 to threonine 883 and glutamine 902 to lysine 937. 4 residues coordinate Zn(2+): cysteine 941, cysteine 943, cysteine 952, and histidine 953.

This sequence belongs to the SecA family. As to quaternary structure, monomer and homodimer. Part of the essential Sec protein translocation apparatus which comprises SecA, SecYEG and auxiliary proteins SecDF. Other proteins may also be involved. Zn(2+) is required as a cofactor.

The protein localises to the cell membrane. The protein resides in the cytoplasm. The enzyme catalyses ATP + H2O + cellular proteinSide 1 = ADP + phosphate + cellular proteinSide 2.. In terms of biological role, part of the Sec protein translocase complex. Interacts with the SecYEG preprotein conducting channel. Has a central role in coupling the hydrolysis of ATP to the transfer of proteins into and across the cell membrane, serving as an ATP-driven molecular motor driving the stepwise translocation of polypeptide chains across the membrane. The protein is Protein translocase subunit SecA of Bifidobacterium adolescentis (strain ATCC 15703 / DSM 20083 / NCTC 11814 / E194a).